The primary structure comprises 399 residues: Phosphoglycerate kinase (399 aa).

Substrate-binding positions include 21–23 (DFN), Arg-36, 59–62 (HLGR), Arg-120, and Arg-158. ATP-binding positions include Lys-209, Gly-297, Glu-328, and 355 to 358 (GGDS).

Belongs to the phosphoglycerate kinase family. As to quaternary structure, monomer.

It is found in the cytoplasm. The enzyme catalyses (2R)-3-phosphoglycerate + ATP = (2R)-3-phospho-glyceroyl phosphate + ADP. It functions in the pathway carbohydrate degradation; glycolysis; pyruvate from D-glyceraldehyde 3-phosphate: step 2/5. This is Phosphoglycerate kinase from Streptococcus thermophilus (strain ATCC BAA-491 / LMD-9).